The sequence spans 520 residues: AAA-ATPase At5g57480 (520 aa).

Residues 1–24 (MKEYWTSLASLLGVLAFCQSLMQS) form the signal peptide. 244-251 (GPPGTGKS) is a binding site for ATP. 2 disordered regions span residues 307–340 (KKNS…EEGG) and 467–520 (NVKD…TRED). A compositionally biased stretch (gly residues) spans 328–340 (SGSGSGGSGEEGG). Residues 497 to 512 (QNEDEDHDEEEIELED) show a composition bias toward acidic residues.

It belongs to the AAA ATPase family. BCS1 subfamily. Requires Mg(2+) as cofactor.

It catalyses the reaction ATP + H2O = ADP + phosphate + H(+). This chain is AAA-ATPase At5g57480, found in Arabidopsis thaliana (Mouse-ear cress).